We begin with the raw amino-acid sequence, 242 residues long: Glutamine transport ATP-binding protein GlnQ (242 aa).

In terms of domain architecture, ABC transporter spans 2–236 (ITFQNVNKHY…PKEERARLFL (235 aa)). 34-41 (GPSGSGKS) lines the ATP pocket.

The protein belongs to the ABC transporter superfamily. In terms of assembly, the complex is composed of two ATP-binding proteins (GlnQ), two transmembrane proteins (GlnM and GlnP) and a solute-binding protein (GlnH).

It is found in the cell membrane. Its function is as follows. Part of the ABC transporter complex GlnHMPQ involved in glutamine transport. Probably responsible for energy coupling to the transport system. In Bacillus subtilis (strain 168), this protein is Glutamine transport ATP-binding protein GlnQ (glnQ).